Consider the following 267-residue polypeptide: Small ribosomal subunit protein uS3 (267 aa).

The KH type-2 domain maps to isoleucine 39 to arginine 114. The span at alanine 229–glycine 248 shows a compositional bias: low complexity. Residues alanine 229–asparagine 267 form a disordered region.

Belongs to the universal ribosomal protein uS3 family. In terms of assembly, part of the 30S ribosomal subunit. Forms a tight complex with proteins S10 and S14.

In terms of biological role, binds the lower part of the 30S subunit head. Binds mRNA in the 70S ribosome, positioning it for translation. This Oenococcus oeni (strain ATCC BAA-331 / PSU-1) protein is Small ribosomal subunit protein uS3.